Reading from the N-terminus, the 410-residue chain is G-protein coupled receptor family C group 5 member B (410 aa).

An N-terminal signal peptide occupies residues methionine 1–serine 28. The Extracellular portion of the chain corresponds to glutamate 29 to glycine 56. Asparagine 30 carries an N-linked (GlcNAc...) asparagine glycan. The chain crosses the membrane as a helical span at residues isoleucine 57 to leucine 77. Topologically, residues leucine 78–cysteine 94 are cytoplasmic. A helical membrane pass occupies residues leucine 95 to isoleucine 115. Topologically, residues glutamine 116 to arginine 126 are extracellular. The chain crosses the membrane as a helical span at residues phenylalanine 127 to valine 147. The Cytoplasmic portion of the chain corresponds to arginine 148 to serine 164. The helical transmembrane segment at leucine 165–valine 185 threads the bilayer. Residues leucine 186–aspartate 199 lie on the Extracellular side of the membrane. The chain crosses the membrane as a helical span at residues phenylalanine 200–phenylalanine 220. Residues threonine 221–alanine 234 are Cytoplasmic-facing. Residues phenylalanine 235–leucine 255 traverse the membrane as a helical segment. At phenylalanine 256 to threonine 271 the chain is on the extracellular side. A helical membrane pass occupies residues leucine 272–isoleucine 292. Residues histidine 293–tryptophan 410 lie on the Cytoplasmic side of the membrane. At serine 355 the chain carries Phosphoserine. The interval leucine 356–asparagine 381 is disordered. Over residues serine 360–glycine 371 the composition is skewed to low complexity.

This sequence belongs to the G-protein coupled receptor 3 family.

It is found in the cell membrane. Its subcellular location is the cytoplasmic vesicle membrane. Functionally, G-protein coupled receptor involved in the regulation of cell volume. The chain is G-protein coupled receptor family C group 5 member B (Gprc5b) from Mus musculus (Mouse).